Consider the following 146-residue polypeptide: Aminoglycoside N(6')-acetyltransferase type 1 (146 aa).

Residues 1–146 form the N-acetyltransferase domain; that stretch reads MNIMPISESQ…RVVYFKKNIG (146 aa). Residues tryptophan 22, histidine 25, tyrosine 66, and glutamate 79 each contribute to the substrate site. 81–83 serves as a coordination point for acetyl-CoA; it reads IFV. A substrate-binding site is contributed by aspartate 115. Asparagine 120 is an acetyl-CoA binding site. Glutamate 136 lines the substrate pocket.

Homodimer.

The catalysed reaction is kanamycin B + acetyl-CoA = N(6')-acetylkanamycin B + CoA + H(+). Functionally, catalyzes the transfer of an acetyl group from acetyl-CoA to the 6'-amino group of aminoglycoside molecules conferring resistance to antibiotics containing the purpurosamine ring including amikacin, kanamycin, tobramycin and netilmicin. The sequence is that of Aminoglycoside N(6')-acetyltransferase type 1 from Acinetobacter baumannii.